A 215-amino-acid polypeptide reads, in one-letter code: tRNA (guanine-N(7)-)-methyltransferase (215 aa).

Positions 44, 69, 96, and 118 each coordinate S-adenosyl-L-methionine. Residue Asp-118 is part of the active site. Residue Lys-122 coordinates substrate. The interval 124-129 is interaction with RNA; sequence RHEKRR. Substrate contacts are provided by residues Asp-154 and 192 to 195; that span reads TEYE.

This sequence belongs to the class I-like SAM-binding methyltransferase superfamily. TrmB family.

It catalyses the reaction guanosine(46) in tRNA + S-adenosyl-L-methionine = N(7)-methylguanosine(46) in tRNA + S-adenosyl-L-homocysteine. It functions in the pathway tRNA modification; N(7)-methylguanine-tRNA biosynthesis. Functionally, catalyzes the formation of N(7)-methylguanine at position 46 (m7G46) in tRNA. The sequence is that of tRNA (guanine-N(7)-)-methyltransferase from Limosilactobacillus fermentum (strain NBRC 3956 / LMG 18251) (Lactobacillus fermentum).